The sequence spans 418 residues: Sprouty-related, EVH1 domain-containing protein 2 (418 aa).

Positions 5–122 (THPDDDSYIV…RGVRKAIEDL (118 aa)) constitute a WH1 domain. Positions 127–172 (TTSSSTIHNEAELGDDDVFTTATDSSSNSSQKREQPTRTVSSPTSC) are disordered. Over residues 146–156 (TTATDSSSNSS) the composition is skewed to polar residues. One can recognise a KBD domain in the interval 201 to 257 (PYRQVSFPDDDEEIVRINPREKIWMTGYEDYRHAPVRGKYPDPSEDVDSSYVRFAKG). Position 206 is a phosphoserine (Ser-206). Residues Tyr-228 and Tyr-231 each carry the phosphotyrosine modification. The disordered stretch occupies residues 275 to 302 (GLGEDPKGRGGSVIKTQPSRGKSRRRKE). The SPR domain maps to 308-416 (RCVYCRDMFN…CRCCGGKHKA (109 aa)).

As to quaternary structure, homodimer and heterodimer. Able to interact with SPRED1 to form heterodimers. Interacts with RAS. May interact with ZDHHC13 (via ANK repeats) and ZDHHC17 (via ANK repeats). Interacts with TESK1. Interacts with NF1. Post-translationally, phosphorylated on serine and threonine residues. Phosphorylated on tyrosine. Phosphorylation of Tyr-228 and Tyr-231 are required for ubiquitination. Ubiquitinated; leading to degradation by the proteasome.

It localises to the cell membrane. Its subcellular location is the cytoplasmic vesicle. The protein localises to the secretory vesicle membrane. It is found in the cytoplasm. Negatively regulates Ras signaling pathways and downstream activation of MAP kinases. Recruits and translocates NF1 to the cell membrane, thereby enabling NF1-dependent hydrolysis of active GTP-bound Ras to inactive GDP-bound Ras. Inhibits fibroblast growth factor (FGF)-induced retinal lens fiber differentiation, probably by inhibiting FGF-mediated phosphorylation of ERK1/2. Inhibits TGFB-induced epithelial-to-mesenchymal transition in lens epithelial cells. The protein is Sprouty-related, EVH1 domain-containing protein 2 (SPRED2) of Pongo abelii (Sumatran orangutan).